The chain runs to 384 residues: Small ribosomal subunit protein mS31 (384 aa).

The N-terminal 54 residues, 1–54, are a transit peptide targeting the mitochondrion; the sequence is MLHRIPAFLRPRPFSGLPLSCGNRDVSVAVLPAAQSGAVRTENNIQRHFCTSRS. The interval 101 to 136 is disordered; the sequence is TANVKTPKPRGRKPSASLEATVDRLQKAPEDPPKKR. Basic and acidic residues predominate over residues 121–136; that stretch reads TVDRLQKAPEDPPKKR.

It belongs to the mitochondrion-specific ribosomal protein mS31 family. Component of the mitochondrial ribosome small subunit (28S) which comprises a 12S rRNA and about 30 distinct proteins.

The protein localises to the mitochondrion. This is Small ribosomal subunit protein mS31 (Mrps31) from Mus musculus (Mouse).